The primary structure comprises 455 residues: Serine--tRNA ligase (455 aa).

L-serine is bound at residue 252 to 254; sequence TAE. ATP contacts are provided by residues 283 to 285 and Val-299; that span reads RKE. Position 306 (Glu-306) interacts with L-serine. 370–373 provides a ligand contact to ATP; that stretch reads EVVS. Residue Thr-406 participates in L-serine binding.

Belongs to the class-II aminoacyl-tRNA synthetase family. Type-1 seryl-tRNA synthetase subfamily. Homodimer. The tRNA molecule binds across the dimer.

The protein localises to the cytoplasm. The catalysed reaction is tRNA(Ser) + L-serine + ATP = L-seryl-tRNA(Ser) + AMP + diphosphate + H(+). The enzyme catalyses tRNA(Sec) + L-serine + ATP = L-seryl-tRNA(Sec) + AMP + diphosphate + H(+). Its pathway is aminoacyl-tRNA biosynthesis; selenocysteinyl-tRNA(Sec) biosynthesis; L-seryl-tRNA(Sec) from L-serine and tRNA(Sec): step 1/1. Its function is as follows. Catalyzes the attachment of serine to tRNA(Ser). Is also able to aminoacylate tRNA(Sec) with serine, to form the misacylated tRNA L-seryl-tRNA(Sec), which will be further converted into selenocysteinyl-tRNA(Sec). The chain is Serine--tRNA ligase from Pyrococcus furiosus (strain ATCC 43587 / DSM 3638 / JCM 8422 / Vc1).